A 109-amino-acid polypeptide reads, in one-letter code: Keratin, type II microfibrillar (109 aa).

The tract at residues 1 to 10 is linker 1; that stretch reads QNRQCCESNL. Residues 1-109 enclose the IF rod domain; it reads QNRQCCESNL…RLYEEEIRVL (109 aa). The interval 11-109 is coil 1B; that stretch reads EPLFSGYIET…RLYEEEIRVL (99 aa).

Belongs to the intermediate filament family.

In terms of biological role, wool microfibrillar keratin. The chain is Keratin, type II microfibrillar from Ovis aries (Sheep).